The primary structure comprises 381 residues: 1-deoxy-D-xylulose 5-phosphate reductoisomerase (381 aa).

Residues Thr10, Gly11, Ser12, Ile13, Gly36, Lys37, Asn38, and Asn120 each coordinate NADPH. Lys121 provides a ligand contact to 1-deoxy-D-xylulose 5-phosphate. Glu122 serves as a coordination point for NADPH. Asp146 is a binding site for Mn(2+). Residues Ser147, Glu148, Ser172, and His195 each coordinate 1-deoxy-D-xylulose 5-phosphate. Glu148 lines the Mn(2+) pocket. Residue Gly201 participates in NADPH binding. Residues Ser208, Asn213, Lys214, and Glu217 each contribute to the 1-deoxy-D-xylulose 5-phosphate site. Glu217 is a binding site for Mn(2+).

Belongs to the DXR family. The cofactor is Mg(2+). Requires Mn(2+) as cofactor.

The catalysed reaction is 2-C-methyl-D-erythritol 4-phosphate + NADP(+) = 1-deoxy-D-xylulose 5-phosphate + NADPH + H(+). Its pathway is isoprenoid biosynthesis; isopentenyl diphosphate biosynthesis via DXP pathway; isopentenyl diphosphate from 1-deoxy-D-xylulose 5-phosphate: step 1/6. Catalyzes the NADPH-dependent rearrangement and reduction of 1-deoxy-D-xylulose-5-phosphate (DXP) to 2-C-methyl-D-erythritol 4-phosphate (MEP). The polypeptide is 1-deoxy-D-xylulose 5-phosphate reductoisomerase (Lysinibacillus sphaericus (strain C3-41)).